The chain runs to 1117 residues: DNA-directed RNA polymerase subunit beta (1117 aa).

Positions 1094–1117 (QLARRTPPRPTYESLSRESLDDDE) are disordered. Residues 1108–1117 (LSRESLDDDE) are compositionally biased toward basic and acidic residues.

The protein belongs to the RNA polymerase beta chain family. In cyanobacteria the RNAP catalytic core is composed of 2 alpha, 1 beta, 1 beta', 1 gamma and 1 omega subunit. When a sigma factor is associated with the core the holoenzyme is formed, which can initiate transcription.

The enzyme catalyses RNA(n) + a ribonucleoside 5'-triphosphate = RNA(n+1) + diphosphate. In terms of biological role, DNA-dependent RNA polymerase catalyzes the transcription of DNA into RNA using the four ribonucleoside triphosphates as substrates. The polypeptide is DNA-directed RNA polymerase subunit beta (Trichormus variabilis (strain ATCC 29413 / PCC 7937) (Anabaena variabilis)).